We begin with the raw amino-acid sequence, 140 residues long: Nucleoside diphosphate kinase (140 aa).

ATP contacts are provided by Lys-11, Phe-59, Arg-87, Thr-93, Arg-104, and Asn-114. His-117 (pros-phosphohistidine intermediate) is an active-site residue.

This sequence belongs to the NDK family. Homotetramer. Requires Mg(2+) as cofactor.

Its subcellular location is the cytoplasm. The enzyme catalyses a 2'-deoxyribonucleoside 5'-diphosphate + ATP = a 2'-deoxyribonucleoside 5'-triphosphate + ADP. It carries out the reaction a ribonucleoside 5'-diphosphate + ATP = a ribonucleoside 5'-triphosphate + ADP. In terms of biological role, major role in the synthesis of nucleoside triphosphates other than ATP. The ATP gamma phosphate is transferred to the NDP beta phosphate via a ping-pong mechanism, using a phosphorylated active-site intermediate. The chain is Nucleoside diphosphate kinase from Rickettsia felis (strain ATCC VR-1525 / URRWXCal2) (Rickettsia azadi).